Consider the following 764-residue polypeptide: Phenylalanine--tRNA ligase beta subunit (764 aa).

In terms of domain architecture, tRNA-binding spans 38–148 (CIAPKNVVVG…GELVLGKELH (111 aa)). The region spanning 375-455 (LKDCALTFQL…RFVGIDNLVS (81 aa)) is the B5 domain. Aspartate 433, aspartate 439, glutamate 442, and glutamate 443 together coordinate Mg(2+). The FDX-ACB domain occupies 673-763 (SIYPSSVRDL…LEKEFNARLK (91 aa)).

It belongs to the phenylalanyl-tRNA synthetase beta subunit family. Type 1 subfamily. As to quaternary structure, tetramer of two alpha and two beta subunits. Mg(2+) is required as a cofactor.

It localises to the cytoplasm. It catalyses the reaction tRNA(Phe) + L-phenylalanine + ATP = L-phenylalanyl-tRNA(Phe) + AMP + diphosphate + H(+). In Helicobacter pylori (strain J99 / ATCC 700824) (Campylobacter pylori J99), this protein is Phenylalanine--tRNA ligase beta subunit (pheT).